The sequence spans 345 residues: MKSLVLLLCFAQLWGCQSAPQGTGLGFRELACDDPEAEQVALLAVDYLNNHLLQGFKQVLNQIDKVKVWSRRPFGVVYEMEVDTLETTCHALDPTPLANCSVRQLTEHAVEGDCDFHILKQDGQFRVMHTQCHSTPDSAEDVRKLCPRCPLLTPFNDTNVVHTVNTALAAFNTQNNGTYFKLVEISRAQNVPLPVSTLVEFVIAATDCTAKEVTDPAKCNLLAEKQHGFCKANLMHNLGGEEVSVACKLFQTQPQPANANAVGPVPTANAALPADPPASVVVGPVVVPRGLSDHRTYHDLRHAFSPVASVESASGETLHSPKVGQPGAAGPVSPMCPGRIRHFKI.

Positions 1 to 18 are cleaved as a signal peptide; that stretch reads MKSLVLLLCFAQLWGCQS. In terms of domain architecture, Cystatin fetuin-A-type 1 spans 19–133; the sequence is APQGTGLGFR…QFRVMHTQCH (115 aa). 6 disulfides stabilise this stretch: Cys-32-Cys-336, Cys-89-Cys-100, Cys-114-Cys-132, Cys-146-Cys-149, Cys-208-Cys-219, and Cys-230-Cys-247. A glycan (N-linked (GlcNAc...) asparagine) is linked at Asn-99. At Ser-134 the chain carries Phosphoserine. At Thr-135 the chain carries Phosphothreonine. Phosphoserine is present on Ser-138. In terms of domain architecture, Cystatin fetuin-A-type 2 spans 144 to 250; that stretch reads KLCPRCPLLT…EEVSVACKLF (107 aa). N-linked (GlcNAc...) asparagine glycosylation is found at Asn-156 and Asn-176. 4 positions are modified to phosphoserine: Ser-305, Ser-309, Ser-312, and Ser-314. The segment at 312–334 is disordered; that stretch reads SASGETLHSPKVGQPGAAGPVSP.

The protein belongs to the fetuin family. Post-translationally, phosphorylated by FAM20C in the extracellular medium. In terms of tissue distribution, liver is the major site of synthesis, but fetuin is also expressed in limb buds and other extrahepatic tissues during development.

It is found in the secreted. In terms of biological role, probably involved in differentiation. Its function is as follows. (Microbial infection) Facilitates invasion of hepatocytes by Plasmodium berghei sporozoites. In Mus musculus (Mouse), this protein is Alpha-2-HS-glycoprotein (Ahsg).